The sequence spans 81 residues: uncharacterized protein (81 aa).

The N-terminal stretch at 1–20 (MIDDHEALLLLVLSSGPAAL) is a signal peptide.

This is an uncharacterized protein from Treponema pallidum (strain Nichols).